The following is a 452-amino-acid chain: Ethanolamine kinase 1 (452 aa).

Positions 26 to 64 (AVQTRIGNSAASRRSPAARPPVPAPPALPRGRPGTEGST) are disordered. A compositionally biased stretch (pro residues) spans 43–53 (ARPPVPAPPAL).

Belongs to the choline/ethanolamine kinase family. As to expression, expressed in kidney, liver, placenta, heart, leukocyte, ovary and testis.

Its subcellular location is the cytoplasm. The enzyme catalyses ethanolamine + ATP = phosphoethanolamine + ADP + H(+). It participates in phospholipid metabolism; phosphatidylethanolamine biosynthesis; phosphatidylethanolamine from ethanolamine: step 1/3. Functionally, highly specific for ethanolamine phosphorylation. May be a rate-controlling step in phosphatidylethanolamine biosynthesis. The protein is Ethanolamine kinase 1 of Homo sapiens (Human).